Reading from the N-terminus, the 326-residue chain is Apoptosis facilitator Bcl-2-like protein 14 (326 aa).

Residue S44 is modified to Phosphoserine. The interval 99–127 (TEKEEEPPSSPKEIHAQGPFPVERQGRNQ) is disordered. A BH3 motif is present at residues 211-225 (IVELLKYSGDQLGRE). Residues 307–314 (WVQQNGGW) carry the BH2 motif.

It belongs to the Bcl-2 family. Post-translationally, phosphorylated by MELK, leading to inhibit its pro-apoptotic function.

Its subcellular location is the cytoplasm. In terms of biological role, plays a role in apoptosis. The sequence is that of Apoptosis facilitator Bcl-2-like protein 14 (Bcl2l14) from Rattus norvegicus (Rat).